The sequence spans 728 residues: tRNA (guanine(27)-N(2))-dimethyltransferase (728 aa).

Residues 1-10 (MENMAEEELL) are compositionally biased toward acidic residues. 2 disordered regions span residues 1-78 (MENM…SKRH) and 98-118 (DVDS…SQTC). Phosphothreonine is present on T23. A compositionally biased stretch (pro residues) spans 23 to 33 (TPAPDSAPVPA). Residues 34 to 46 (PAADTALDSAPTP) show a composition bias toward low complexity. Pro residues predominate over residues 47–61 (DSDPAPALAPAPAPA). A Phosphoserine modification is found at S63. The segment covering 101-118 (SASSLNSDNPGTENSQTC) has biased composition (polar residues). A Nucleolar localization signal motif is present at residues 132 to 136 (HKLRR). Residues 181 to 203 (YHCIICSATITRRTDMLGHVKRH) form a C2H2-type zinc finger. A Trm1 methyltransferase domain is found at 224 to 683 (EILKETDTDI…APLMQFKSIL (460 aa)). The S-adenosyl-L-methionine site is built by R257, D304, D352, and A353. Positions 483, 486, 508, and 510 each coordinate Zn(2+). A Glycyl lysine isopeptide (Lys-Gly) (interchain with G-Cter in SUMO2) cross-link involves residue K580. The residue at position 607 (S607) is a Phosphoserine. The disordered stretch occupies residues 693–728 (GAQSEGQMPPAAEDTVTDRVEMSVSDKAEASGCRRW). Residues 708 to 721 (VTDRVEMSVSDKAE) show a composition bias toward basic and acidic residues.

Belongs to the class I-like SAM-binding methyltransferase superfamily. Trm1 family. Expressed in various neuronal structures during embryonic development, including spinal ganglia, trigeminal nerve and ganglion, olfactory and nasopharyngeal epithelium, nuclei of the metencephalon, thalamus and medulla oblongata. Also expressed in lung, esophagus, epiglottis, ependyma, vertebral column, spinal cord and brown adipose tissue. Expression persists in the adult brain with dynamically changing patterns in cortex and cerebellum.

It localises to the nucleus. The protein resides in the nucleolus. It carries out the reaction guanosine(27) in tRNA(Tyr) + 2 S-adenosyl-L-methionine = N(2)-dimethylguanosine(27) in tRNA(Tyr) + 2 S-adenosyl-L-homocysteine + 2 H(+). Its function is as follows. Specifically dimethylates a single guanine residue at position 27 of tRNA(Tyr) using S-adenosyl-L-methionine as donor of the methyl groups. Dimethylation at position 27 of tRNA(Tyr) is required for efficient translation of tyrosine codons. Also required to maintain 3-(3-amino-3-carboxypropyl)uridine (acp3U) in the D-loop of several cytoplasmic tRNAs. May play a role in motor coordination and exploratory behavior. The chain is tRNA (guanine(27)-N(2))-dimethyltransferase from Mus musculus (Mouse).